The primary structure comprises 426 residues: Serine--tRNA ligase (426 aa).

233–235 (TSE) is an L-serine binding site. 264 to 266 (RAE) serves as a coordination point for ATP. Position 287 (Glu-287) interacts with L-serine. 351 to 354 (EISS) is an ATP binding site. Ser-387 lines the L-serine pocket.

Belongs to the class-II aminoacyl-tRNA synthetase family. Type-1 seryl-tRNA synthetase subfamily. Homodimer. The tRNA molecule binds across the dimer.

Its subcellular location is the cytoplasm. It catalyses the reaction tRNA(Ser) + L-serine + ATP = L-seryl-tRNA(Ser) + AMP + diphosphate + H(+). It carries out the reaction tRNA(Sec) + L-serine + ATP = L-seryl-tRNA(Sec) + AMP + diphosphate + H(+). The protein operates within aminoacyl-tRNA biosynthesis; selenocysteinyl-tRNA(Sec) biosynthesis; L-seryl-tRNA(Sec) from L-serine and tRNA(Sec): step 1/1. In terms of biological role, catalyzes the attachment of serine to tRNA(Ser). Is also able to aminoacylate tRNA(Sec) with serine, to form the misacylated tRNA L-seryl-tRNA(Sec), which will be further converted into selenocysteinyl-tRNA(Sec). This is Serine--tRNA ligase from Stenotrophomonas maltophilia (strain R551-3).